A 412-amino-acid polypeptide reads, in one-letter code: uncharacterized protein (412 aa).

7 consecutive repeat copies span residues 112-116 (GSIRS), 117-121 (GSIRS), 122-126 (GSIRD), 127-131 (GSIRD), 132-136 (GSIRS), 137-141 (GNIRD), and 142-146 (GSVRS). Residues 112 to 146 (GSIRSGSIRSGSIRDGSIRDGSIRSGNIRDGSVRS) are 7 X 5 AA tandem repeats of G-[NS]-[IV]-R-[DS]. A compositionally biased stretch (low complexity) spans 116 to 126 (SGSIRSGSIRD). The disordered stretch occupies residues 116 to 209 (SGSIRSGSIR…SEKSIKPSTK (94 aa)). Residues 192–209 (NHYAESEYSEKSIKPSTK) are compositionally biased toward basic and acidic residues.

Belongs to the asfivirus B407L family.

This is an uncharacterized protein from Ornithodoros (relapsing fever ticks).